The chain runs to 873 residues: Aminopeptidase M1-D (873 aa).

A required for membrane association region spans residues 96 to 203; that stretch reads LGEGVLAMRF…MSTYLVAIVV (108 aa). Residues Glu-136 and 269-273 each bind substrate; that span reads GAMEN. His-305 provides a ligand contact to Zn(2+). Glu-306 functions as the Proton acceptor in the catalytic mechanism. Positions 309 and 328 each coordinate Zn(2+). Positions 721 to 722 match the Dileucine internalization motif motif; the sequence is LL.

This sequence belongs to the peptidase M1 family. As to quaternary structure, homodimer. The cofactor is Zn(2+).

The protein resides in the membrane. Its subcellular location is the microsome membrane. The protein localises to the cytoplasm. It catalyses the reaction Release of an N-terminal amino acid, Xaa-|-Yaa- from a peptide, amide or arylamide. Xaa is preferably Ala, but may be most amino acids including Pro (slow action). When a terminal hydrophobic residue is followed by a prolyl residue, the two may be released as an intact Xaa-Pro dipeptide.. This is Aminopeptidase M1-D from Oryza sativa subsp. japonica (Rice).